A 262-amino-acid polypeptide reads, in one-letter code: Hydroxyethylthiazole kinase (262 aa).

Residue M50 participates in substrate binding. ATP contacts are provided by R125 and T171. G198 lines the substrate pocket.

The protein belongs to the Thz kinase family. The cofactor is Mg(2+).

It catalyses the reaction 5-(2-hydroxyethyl)-4-methylthiazole + ATP = 4-methyl-5-(2-phosphooxyethyl)-thiazole + ADP + H(+). The protein operates within cofactor biosynthesis; thiamine diphosphate biosynthesis; 4-methyl-5-(2-phosphoethyl)-thiazole from 5-(2-hydroxyethyl)-4-methylthiazole: step 1/1. In terms of biological role, catalyzes the phosphorylation of the hydroxyl group of 4-methyl-5-beta-hydroxyethylthiazole (THZ). In Escherichia coli (strain 55989 / EAEC), this protein is Hydroxyethylthiazole kinase.